Consider the following 307-residue polypeptide: Leucine-rich repeat-containing protein 59 (307 aa).

Residue M1 is modified to N-acetylmethionine. T2 is modified (N-acetylthreonine; in Leucine-rich repeat-containing protein 59, N-terminally processed). Over 2-244 (TKAGSKGGNL…KPPPRKHTRS (243 aa)) the chain is Cytoplasmic. LRR repeat units lie at residues 10–31 (NLRD…NEVP), 40–62 (KATV…CGLT), 63–84 (HLVK…FGRL), 86–107 (NLQH…FAQL), and 109–128 (NLKW…AKVA). Phosphoserine occurs at positions 23 and 25. The residue at position 73 (K73) is an N6-succinyllysine. N6-acetyllysine is present on K135. Residues 148–216 (MKAVQADQER…KASKREQEKK (69 aa)) are a coiled coil. The segment at 150–241 (AVQADQERER…RPRKPPPRKH (92 aa)) is disordered. Over residues 154–221 (DQERERQRRL…EQEKKPKKEA (68 aa)) the composition is skewed to basic and acidic residues. The span at 229–241 (SGSRPRKPPPRKH) shows a compositional bias: basic residues. The chain crosses the membrane as a helical span at residues 245–265 (WAVLKVLLLLLLLCVAGGLVV). Residues 266 to 307 (CRVTGLHQQPLCTSVNTIYDNAVQGLRHHEILQWVLQTDSQQ) are Lumenal-facing.

As to quaternary structure, can form homodimers. Interacts with SGO1. Interacts with FGF1.

It is found in the microsome membrane. The protein resides in the endoplasmic reticulum membrane. The protein localises to the nucleus envelope. Functionally, required for nuclear import of FGF1, but not that of FGF2. Might regulate nuclear import of exogenous FGF1 by facilitating interaction with the nuclear import machinery and by transporting cytosolic FGF1 to, and possibly through, the nuclear pores. This is Leucine-rich repeat-containing protein 59 (Lrrc59) from Mus musculus (Mouse).